Reading from the N-terminus, the 166-residue chain is Putative 4-hydroxy-4-methyl-2-oxoglutarate aldolase (166 aa).

Substrate contacts are provided by residues 74–77 (GDQI) and Arg-96. Asp-97 serves as a coordination point for a divalent metal cation.

It belongs to the class II aldolase/RraA-like family. Homotrimer. Requires a divalent metal cation as cofactor.

The enzyme catalyses 4-hydroxy-4-methyl-2-oxoglutarate = 2 pyruvate. The catalysed reaction is oxaloacetate + H(+) = pyruvate + CO2. In terms of biological role, catalyzes the aldol cleavage of 4-hydroxy-4-methyl-2-oxoglutarate (HMG) into 2 molecules of pyruvate. Also contains a secondary oxaloacetate (OAA) decarboxylase activity due to the common pyruvate enolate transition state formed following C-C bond cleavage in the retro-aldol and decarboxylation reactions. The polypeptide is Putative 4-hydroxy-4-methyl-2-oxoglutarate aldolase (Xanthomonas campestris pv. campestris (strain 8004)).